Here is a 515-residue protein sequence, read N- to C-terminus: ATP synthase subunit alpha (515 aa).

169–176 (GDRQTGKT) is a binding site for ATP.

The protein belongs to the ATPase alpha/beta chains family. As to quaternary structure, F-type ATPases have 2 components, CF(1) - the catalytic core - and CF(0) - the membrane proton channel. CF(1) has five subunits: alpha(3), beta(3), gamma(1), delta(1), epsilon(1). CF(0) has three main subunits: a(1), b(2) and c(9-12). The alpha and beta chains form an alternating ring which encloses part of the gamma chain. CF(1) is attached to CF(0) by a central stalk formed by the gamma and epsilon chains, while a peripheral stalk is formed by the delta and b chains.

It is found in the cell inner membrane. The catalysed reaction is ATP + H2O + 4 H(+)(in) = ADP + phosphate + 5 H(+)(out). Functionally, produces ATP from ADP in the presence of a proton gradient across the membrane. The alpha chain is a regulatory subunit. The chain is ATP synthase subunit alpha from Neisseria gonorrhoeae (strain ATCC 700825 / FA 1090).